The sequence spans 84 residues: Defensin-like protein 49 (84 aa).

The first 29 residues, 1 to 29 (MGITKSLMIFFHIVLLAVSLSNNIILTSG), serve as a signal peptide directing secretion. Intrachain disulfides connect Cys-40-Cys-82, Cys-44-Cys-68, Cys-54-Cys-80, and Cys-58-Cys-81.

Belongs to the DEFL family.

It localises to the secreted. The chain is Defensin-like protein 49 from Arabidopsis thaliana (Mouse-ear cress).